The sequence spans 344 residues: Heat-inducible transcription repressor HrcA (344 aa).

It belongs to the HrcA family.

In terms of biological role, negative regulator of class I heat shock genes (grpE-dnaK-dnaJ and groELS operons). Prevents heat-shock induction of these operons. This Moorella thermoacetica (strain ATCC 39073 / JCM 9320) protein is Heat-inducible transcription repressor HrcA.